The primary structure comprises 487 residues: Sugar transporter ERD6-like 6 (487 aa).

The residue at position 2 (S2) is an N-acetylserine. The next 12 helical transmembrane spans lie at 46-66 (ISVL…GFTC), 89-109 (VFGS…GQIA), 115-135 (KGSL…ISFA), 146-166 (LLEG…IAEI), 178-198 (VNQL…LFVP), 201-221 (ILAV…FFIP), 284-304 (LMVG…GVLF), 320-340 (AATF…TWLV), 347-367 (LLLT…AAAF), 389-409 (VGVV…PWLI), 425-445 (IATL…NLLL), and 451-471 (GTFT…TLWV).

The protein belongs to the major facilitator superfamily. Sugar transporter (TC 2.A.1.1) family.

The protein resides in the membrane. Sugar transporter. The protein is Sugar transporter ERD6-like 6 of Arabidopsis thaliana (Mouse-ear cress).